Reading from the N-terminus, the 163-residue chain is NAD(P)H-quinone oxidoreductase subunit I, chloroplastic (163 aa).

2 4Fe-4S ferredoxin-type domains span residues 55–84 (GRIH…VDWK) and 95–124 (LNYS…MTEE). C64, C67, C70, C74, C104, C107, C110, and C114 together coordinate [4Fe-4S] cluster.

Belongs to the complex I 23 kDa subunit family. NDH is composed of at least 16 different subunits, 5 of which are encoded in the nucleus. It depends on [4Fe-4S] cluster as a cofactor.

The protein localises to the plastid. Its subcellular location is the chloroplast thylakoid membrane. It carries out the reaction a plastoquinone + NADH + (n+1) H(+)(in) = a plastoquinol + NAD(+) + n H(+)(out). The enzyme catalyses a plastoquinone + NADPH + (n+1) H(+)(in) = a plastoquinol + NADP(+) + n H(+)(out). NDH shuttles electrons from NAD(P)H:plastoquinone, via FMN and iron-sulfur (Fe-S) centers, to quinones in the photosynthetic chain and possibly in a chloroplast respiratory chain. The immediate electron acceptor for the enzyme in this species is believed to be plastoquinone. Couples the redox reaction to proton translocation, and thus conserves the redox energy in a proton gradient. The polypeptide is NAD(P)H-quinone oxidoreductase subunit I, chloroplastic (Glycine max (Soybean)).